We begin with the raw amino-acid sequence, 1015 residues long: Beta-galactosidase (1015 aa).

The active-site Proton donor is glutamate 434. The Nucleophile role is filled by glutamate 513.

Belongs to the glycosyl hydrolase 2 family. The cofactor is Mg(2+). It depends on Mn(2+) as a cofactor.

The catalysed reaction is Hydrolysis of terminal non-reducing beta-D-galactose residues in beta-D-galactosides.. The chain is Beta-galactosidase (lacZ) from Arthrobacter sp. (strain B7).